Here is a 128-residue protein sequence, read N- to C-terminus: Aspartate 1-decarboxylase (128 aa).

Residue S25 is the Schiff-base intermediate with substrate; via pyruvic acid of the active site. S25 is modified (pyruvic acid (Ser)). Residue T57 coordinates substrate. Y58 functions as the Proton donor in the catalytic mechanism. 73-75 (GSA) contributes to the substrate binding site.

Belongs to the PanD family. Heterooctamer of four alpha and four beta subunits. Pyruvate serves as cofactor. In terms of processing, is synthesized initially as an inactive proenzyme, which is activated by self-cleavage at a specific serine bond to produce a beta-subunit with a hydroxyl group at its C-terminus and an alpha-subunit with a pyruvoyl group at its N-terminus.

Its subcellular location is the cytoplasm. It carries out the reaction L-aspartate + H(+) = beta-alanine + CO2. Its pathway is cofactor biosynthesis; (R)-pantothenate biosynthesis; beta-alanine from L-aspartate: step 1/1. Functionally, catalyzes the pyruvoyl-dependent decarboxylation of aspartate to produce beta-alanine. The chain is Aspartate 1-decarboxylase from Burkholderia vietnamiensis (strain G4 / LMG 22486) (Burkholderia cepacia (strain R1808)).